The sequence spans 375 residues: Growth/differentiation factor 8 (375 aa).

An N-terminal signal peptide occupies residues 1–23; it reads MQKLQLCVYIYLFMLIVAGPVDL. Positions 24-266 are excised as a propeptide; the sequence is NENSEQKENV…VTDTPKRSRR (243 aa). N-linked (GlcNAc...) asparagine glycosylation occurs at Asn71. 4 disulfide bridges follow: Cys272/Cys282, Cys281/Cys340, Cys309/Cys372, and Cys313/Cys374.

The protein belongs to the TGF-beta family. In terms of assembly, homodimer; disulfide-linked. Interacts with WFIKKN2, leading to inhibit its activity. Interacts with FST3. In terms of processing, synthesized as large precursor molecule that undergoes proteolytic cleavage to generate an N-terminal propeptide and a disulfide linked C-terminal dimer, which is the biologically active molecule. The circulating form consists of a latent complex of the C-terminal dimer and other proteins, including its propeptide, which maintain the C-terminal dimer in a latent, inactive state. Ligand activation requires additional cleavage of the prodomain by a tolloid-like metalloproteinase.

It is found in the secreted. Functionally, acts specifically as a negative regulator of skeletal muscle growth. The protein is Growth/differentiation factor 8 (MSTN) of Homo sapiens (Human).